The primary structure comprises 212 residues: COP9 signalosome complex subunit 8 (212 aa).

A PCI domain is found at 26–193 (TSLSAYEEQA…KPVVTAPPKD (168 aa)).

The protein belongs to the CSN8 family. As to quaternary structure, component of the COP9 signalosome (CSN) complex.

The protein resides in the cytoplasm. It localises to the nucleus. Its function is as follows. Component of the COP9 signalosome (CSN) complex that acts as an regulator of the ubiquitin (Ubl) conjugation pathway by mediating the deneddylation of the cullin subunit of SCF-type E3 ubiquitin-protein ligase complexes. The CSN complex seems to link protein degradation to sexual development. This chain is COP9 signalosome complex subunit 8 (csnH), found in Emericella nidulans (strain FGSC A4 / ATCC 38163 / CBS 112.46 / NRRL 194 / M139) (Aspergillus nidulans).